The chain runs to 53 residues: MIIEFNLLVILLVQMPLSFYMLYRLCYLLFCFLECFLNLFKKCGVFKNAKWLN.

Residues 26-46 (CYLLFCFLECFLNLFKKCGVF) traverse the membrane as a helical segment.

This sequence belongs to the plectrovirus ORF11 family.

The protein localises to the host membrane. This is an uncharacterized protein from Spiroplasma virus SpV1-R8A2 B (SpV1).